Here is a 445-residue protein sequence, read N- to C-terminus: Asparagine--tRNA ligase (445 aa).

It belongs to the class-II aminoacyl-tRNA synthetase family. As to quaternary structure, homodimer.

It is found in the cytoplasm. It catalyses the reaction tRNA(Asn) + L-asparagine + ATP = L-asparaginyl-tRNA(Asn) + AMP + diphosphate + H(+). The sequence is that of Asparagine--tRNA ligase from Deinococcus deserti (strain DSM 17065 / CIP 109153 / LMG 22923 / VCD115).